An 875-amino-acid polypeptide reads, in one-letter code: MPHSNTLIVPSTNPFDDPSSIKNGLNNLTSSELVNQMKKESLAASVKTPSTPPKECSHLKKGVKLSHLKGNARALRDPSKHLCFICTTEKIKREDYELTLCANCGYLFCCNHESDHSRKHFEKNKKHCVFVNIITLKCHCYSCDADIVIFDKKNLVVRDVQQFICSNLVSSLTKAPNVLKSNSSHFKKEKKSKHSSGKSSKKYKVISPGLKNLGATCFFNSTLQVLCACEALHDVISPFQYSHSSVIVRKLTKSPESSLLSAFIKFLETFYKSDGTISVYRPTTFFGEFRRLHPQFSESVQQDAHELLRLLLDDLISEEFRVLRFNLNSVSRSLQLSPCLTDDEQLSKSLTSFKQVNVTDASLSPNSHNTSDNEQNNEDYVSVSSLVGSETEDITYSKELSQSSDSSQHQHDSFLPANSSPLAASSTKSLPSSELLDSSSDKGQQVFKGQHEVAGTNSFEDPNSHFNVSNSSNHEEASPKKEVLKSPQFQRRSLDILRLGELSSDDMMLDKATMDEFSSSLVIKSIFTGRLTSVVMCQSCNEITNTPEPIQDLSIPIHYPSSRVSRRHRFHRALRSRFSRSPKKSSVKIVVDNANDDTDQAPTTNSSSLNENLLGGHASENDKSLKQSPFQKLTRRLSDLSVNSSGQISKQDFDNSNSIFSESSLSSPIIEEPKTLIDCLKNFTHVEELSGENMFACENCCNQPNEVGSPAKGGLTSDNDKYSFNNSVYRNAYKRMLLDDPLPPVFIIHLKRFFQEISHDGYANPKKISDFIEFEQELDLNEFVMPHLRASSSFRYRLFGVIVHSGTLNYGHYVAYVLSHKFLDLSAPSTNSKDFRSEAGIPERRWLYISDNIVRESSWDEVSKVEAYMLFYERV.

The UBP-type zinc-finger motif lies at 54–167; the sequence is KECSHLKKGV…RDVQQFICSN (114 aa). Residues C56, H58, C83, C86, C101, C104, C109, H116, H120, H127, C140, and C143 each coordinate Zn(2+). One can recognise a USP domain in the interval 208–875; that stretch reads PGLKNLGATC…EAYMLFYERV (668 aa). The Nucleophile role is filled by C217. Residues S333 and S337 each carry the phosphoserine modification. The interval 396-486 is disordered; that stretch reads YSKELSQSSD…ASPKKEVLKS (91 aa). Positions 401 to 438 are enriched in low complexity; it reads SQSSDSSQHQHDSFLPANSSPLAASSTKSLPSSELLDS. Residues 473–484 are compositionally biased toward basic and acidic residues; sequence NHEEASPKKEVL. A phosphoserine mark is found at S486 and S493. The span at 575–586 shows a compositional bias: basic residues; sequence RSRFSRSPKKSS. Positions 575–628 are disordered; sequence RSRFSRSPKKSSVKIVVDNANDDTDQAPTTNSSSLNENLLGGHASENDKSLKQS. The segment covering 600-611 has biased composition (polar residues); the sequence is QAPTTNSSSLNE. Residue S645 is modified to Phosphoserine. The active-site Proton acceptor is the H812.

This sequence belongs to the peptidase C19 family.

The enzyme catalyses Thiol-dependent hydrolysis of ester, thioester, amide, peptide and isopeptide bonds formed by the C-terminal Gly of ubiquitin (a 76-residue protein attached to proteins as an intracellular targeting signal).. This chain is Probable ubiquitin carboxyl-terminal hydrolase 7 (ubp7), found in Schizosaccharomyces pombe (strain 972 / ATCC 24843) (Fission yeast).